Here is a 365-residue protein sequence, read N- to C-terminus: UDP-N-acetylglucosamine--N-acetylmuramyl-(pentapeptide) pyrophosphoryl-undecaprenol N-acetylglucosamine transferase (365 aa).

Residues 11-13, asparagine 124, arginine 165, serine 192, isoleucine 246, and glutamine 291 each bind UDP-N-acetyl-alpha-D-glucosamine; that span reads TGG.

The protein belongs to the glycosyltransferase 28 family. MurG subfamily.

The protein localises to the cell inner membrane. The catalysed reaction is di-trans,octa-cis-undecaprenyl diphospho-N-acetyl-alpha-D-muramoyl-L-alanyl-D-glutamyl-meso-2,6-diaminopimeloyl-D-alanyl-D-alanine + UDP-N-acetyl-alpha-D-glucosamine = di-trans,octa-cis-undecaprenyl diphospho-[N-acetyl-alpha-D-glucosaminyl-(1-&gt;4)]-N-acetyl-alpha-D-muramoyl-L-alanyl-D-glutamyl-meso-2,6-diaminopimeloyl-D-alanyl-D-alanine + UDP + H(+). It functions in the pathway cell wall biogenesis; peptidoglycan biosynthesis. Functionally, cell wall formation. Catalyzes the transfer of a GlcNAc subunit on undecaprenyl-pyrophosphoryl-MurNAc-pentapeptide (lipid intermediate I) to form undecaprenyl-pyrophosphoryl-MurNAc-(pentapeptide)GlcNAc (lipid intermediate II). The chain is UDP-N-acetylglucosamine--N-acetylmuramyl-(pentapeptide) pyrophosphoryl-undecaprenol N-acetylglucosamine transferase from Nitratidesulfovibrio vulgaris (strain ATCC 29579 / DSM 644 / CCUG 34227 / NCIMB 8303 / VKM B-1760 / Hildenborough) (Desulfovibrio vulgaris).